Here is a 29-residue protein sequence, read N- to C-terminus: Galanin (29 aa).

At Ala-29 the chain carries Alanine amide.

It belongs to the galanin family.

Its subcellular location is the secreted. Functionally, contracts smooth muscle of the gastrointestinal and genitourinary tract, regulates growth hormone release, modulates insulin release, and may be involved in the control of adrenal secretion. In Ovis aries (Sheep), this protein is Galanin (GAL).